We begin with the raw amino-acid sequence, 379 residues long: GPN-loop GTPase QQT2 (379 aa).

Met1 carries the post-translational modification N-acetylmethionine. 51–56 (GSGKTS) is a binding site for GTP. A Gly-Pro-Asn (GPN)-loop; involved in dimer interface motif is present at residues 108-110 (GPN). GTP contacts are provided by residues 211 to 214 (NKTD) and Ala267. Positions 288–322 (METYKADLDMRKADKERLEEERKKHEMEKLRKDME) form a coiled coil. 2 stretches are compositionally biased toward basic and acidic residues: residues 303 to 322 (ERLEEERKKHEMEKLRKDME) and 335 to 346 (LKDRDATEKMML). Residues 303-379 (ERLEEERKKH…EDDETKHYYL (77 aa)) are disordered. Over residues 347 to 372 (EEDDEDFQVEDEEDSDDAIDEDDEDD) the composition is skewed to acidic residues.

The protein belongs to the GPN-loop GTPase family. In terms of assembly, heterodimer with QQT1. In terms of tissue distribution, expressed in individual cells of roots, leaves and flowers.

Its subcellular location is the cytoplasm. The protein localises to the nucleus. The protein resides in the cytoskeleton. It is found in the spindle. It localises to the phragmoplast. Functionally, small GTPase that is essential for the correct formation of the tangential divisions in early embryos. Associates with microtubule during mitosis and may function in the positioning of the division plane. May participate in the patterning of the early embryo at the octant-dermatogen transition. The chain is GPN-loop GTPase QQT2 from Arabidopsis thaliana (Mouse-ear cress).